The chain runs to 387 residues: 3-ketoacyl-CoA thiolase (387 aa).

The Acyl-thioester intermediate role is filled by C91. Residues H343 and C373 each act as proton acceptor in the active site.

The protein belongs to the thiolase-like superfamily. Thiolase family. Heterotetramer of two alpha chains (FadB) and two beta chains (FadA).

The protein localises to the cytoplasm. The catalysed reaction is an acyl-CoA + acetyl-CoA = a 3-oxoacyl-CoA + CoA. It functions in the pathway lipid metabolism; fatty acid beta-oxidation. Its function is as follows. Catalyzes the final step of fatty acid oxidation in which acetyl-CoA is released and the CoA ester of a fatty acid two carbons shorter is formed. The sequence is that of 3-ketoacyl-CoA thiolase from Escherichia coli O1:K1 / APEC.